Consider the following 132-residue polypeptide: Homeobox protein HD-4 (132 aa).

The segment at residues 29–88 is a DNA-binding region (homeobox); the sequence is GLSGYRYKTHIQVYVLTKIFEITQYPSHDTRQNLAILLNMSPRTIQIWFQNSRSVSRGAA. A disordered region spans residues 82–101; it reads SVSRGAAKKKVSKDNGPQEA.

The protein localises to the nucleus. The polypeptide is Homeobox protein HD-4 (HD-4) (Encephalitozoon cuniculi (strain GB-M1) (Microsporidian parasite)).